The following is a 66-amino-acid chain: Large ribosomal subunit protein uL29 (66 aa).

It belongs to the universal ribosomal protein uL29 family.

The chain is Large ribosomal subunit protein uL29 from Thermotoga neapolitana (strain ATCC 49049 / DSM 4359 / NBRC 107923 / NS-E).